A 561-amino-acid chain; its full sequence is MSQEFDYIIIGAGSAGNVLATRLTEDADVSVLLLEAGGPDYRFDFRTQMPAALAFPLQGRRYNWAYETDPEPYMNNRRMECGRGKGLGGSSLINGMCYIRGNALDFDGWAKEPGLEDWSYLDCLPYFRKAETRDIGPNDYHGGDGPVSVTTPKAGNNPLFHAMVEAGVQAGYPRTDDLNGYQQEGFGPMDRTVTPEGRRAATGRGYLDQARGRPNLTIVTHALSDRILFSGKRAIGVSYLVGNGDNPVTAHARREVLVCSGAIASPQLLQRSGVGPAALLRDLDIPVVHDLPGVGANLQDHLELYLQYACKQPVSIYPATKWWNQPAIGAQWLFLGKGLGASNQFEAGGFIRTREAFEWPNIQFHFLPVAINYNGSKGVQEHGFQAHMGSMRSPSRGRIHLKSRDPRQHPSILFNYMSHEQDWQEFRDGIRLTREIMNQPALDPYRGRELSPGVSVQSDAELDEFIRNHAETAFHPSCSCKMGSDDMAVVDGQGRVHGMEGLRVVDASIMPLIITGNLNATTIMMAEKIADRIRGRQPLPRSTAKYYVAGDAPVRGNPVRA.

Residue 6-35 coordinates FAD; the sequence is DYIIIGAGSAGNVLATRLTEDADVSVLLLE. The Proton acceptor role is filled by His475.

Belongs to the GMC oxidoreductase family. It depends on FAD as a cofactor.

It carries out the reaction choline + A = betaine aldehyde + AH2. The catalysed reaction is betaine aldehyde + NAD(+) + H2O = glycine betaine + NADH + 2 H(+). The protein operates within amine and polyamine biosynthesis; betaine biosynthesis via choline pathway; betaine aldehyde from choline (cytochrome c reductase route): step 1/1. Functionally, involved in the biosynthesis of the osmoprotectant glycine betaine. Catalyzes the oxidation of choline to betaine aldehyde and betaine aldehyde to glycine betaine at the same rate. This chain is Oxygen-dependent choline dehydrogenase, found in Pseudomonas aeruginosa (strain LESB58).